Reading from the N-terminus, the 242-residue chain is Probable transcriptional regulatory protein NMB1648 (242 aa).

This sequence belongs to the TACO1 family.

The protein resides in the cytoplasm. This is Probable transcriptional regulatory protein NMB1648 from Neisseria meningitidis serogroup B (strain ATCC BAA-335 / MC58).